A 111-amino-acid polypeptide reads, in one-letter code: Large ribosomal subunit protein uL22 (111 aa).

This sequence belongs to the universal ribosomal protein uL22 family. In terms of assembly, part of the 50S ribosomal subunit.

Its function is as follows. This protein binds specifically to 23S rRNA; its binding is stimulated by other ribosomal proteins, e.g. L4, L17, and L20. It is important during the early stages of 50S assembly. It makes multiple contacts with different domains of the 23S rRNA in the assembled 50S subunit and ribosome. Functionally, the globular domain of the protein is located near the polypeptide exit tunnel on the outside of the subunit, while an extended beta-hairpin is found that lines the wall of the exit tunnel in the center of the 70S ribosome. This Chlamydia trachomatis serovar L2b (strain UCH-1/proctitis) protein is Large ribosomal subunit protein uL22.